The sequence spans 247 residues: Adenosylcobinamide-GDP ribazoletransferase (247 aa).

Transmembrane regions (helical) follow at residues 34–54 (IITF…VFMV), 59–79 (CGVP…TGGF), 113–133 (GGLA…ELAL), and 194–214 (VLLP…AIFI).

It belongs to the CobS family. Requires Mg(2+) as cofactor.

It is found in the cell inner membrane. It carries out the reaction alpha-ribazole + adenosylcob(III)inamide-GDP = adenosylcob(III)alamin + GMP + H(+). It catalyses the reaction alpha-ribazole 5'-phosphate + adenosylcob(III)inamide-GDP = adenosylcob(III)alamin 5'-phosphate + GMP + H(+). Its pathway is cofactor biosynthesis; adenosylcobalamin biosynthesis; adenosylcobalamin from cob(II)yrinate a,c-diamide: step 7/7. Joins adenosylcobinamide-GDP and alpha-ribazole to generate adenosylcobalamin (Ado-cobalamin). Also synthesizes adenosylcobalamin 5'-phosphate from adenosylcobinamide-GDP and alpha-ribazole 5'-phosphate. This chain is Adenosylcobinamide-GDP ribazoletransferase, found in Escherichia coli (strain ATCC 8739 / DSM 1576 / NBRC 3972 / NCIMB 8545 / WDCM 00012 / Crooks).